A 145-amino-acid chain; its full sequence is D-aminoacyl-tRNA deacylase (145 aa).

Residues Gly137–Pro138 carry the Gly-cisPro motif, important for rejection of L-amino acids motif.

The protein belongs to the DTD family. In terms of assembly, homodimer.

It localises to the cytoplasm. It catalyses the reaction glycyl-tRNA(Ala) + H2O = tRNA(Ala) + glycine + H(+). The enzyme catalyses a D-aminoacyl-tRNA + H2O = a tRNA + a D-alpha-amino acid + H(+). An aminoacyl-tRNA editing enzyme that deacylates mischarged D-aminoacyl-tRNAs. Also deacylates mischarged glycyl-tRNA(Ala), protecting cells against glycine mischarging by AlaRS. Acts via tRNA-based rather than protein-based catalysis; rejects L-amino acids rather than detecting D-amino acids in the active site. By recycling D-aminoacyl-tRNA to D-amino acids and free tRNA molecules, this enzyme counteracts the toxicity associated with the formation of D-aminoacyl-tRNA entities in vivo and helps enforce protein L-homochirality. This Salmonella arizonae (strain ATCC BAA-731 / CDC346-86 / RSK2980) protein is D-aminoacyl-tRNA deacylase.